The following is a 407-amino-acid chain: tRNA N6-adenosine threonylcarbamoyltransferase, mitochondrial (407 aa).

The N-terminal 30 residues, 1–30 (MISIKGTGRFLLDNYRIWQRRAFNRPIQLR), are a transit peptide targeting the mitochondrion. Positions 145 and 149 each coordinate a divalent metal cation. Substrate contacts are provided by residues 170–174 (LVSGG), aspartate 203, alanine 217, glutamate 221, 328–329 (SN), and serine 360. Aspartate 361 serves as a coordination point for a divalent metal cation.

It belongs to the KAE1 / TsaD family. Homodimer. Requires a divalent metal cation as cofactor.

It localises to the mitochondrion. It carries out the reaction L-threonylcarbamoyladenylate + adenosine(37) in tRNA = N(6)-L-threonylcarbamoyladenosine(37) in tRNA + AMP + H(+). Functionally, required for the formation of a threonylcarbamoyl group on adenosine at position 37 (t(6)A37) in mitochondrial tRNAs that read codons beginning with adenine. Probably involved in the transfer of the threonylcarbamoyl moiety of threonylcarbamoyl-AMP (TC-AMP) to the N6 group of A37. Involved in mitochondrial genome maintenance. This Saccharomyces cerevisiae (strain ATCC 204508 / S288c) (Baker's yeast) protein is tRNA N6-adenosine threonylcarbamoyltransferase, mitochondrial (QRI7).